The sequence spans 500 residues: Cytochrome P450 11B1, mitochondrial (500 aa).

The N-terminal 24 residues, 1–24, are a transit peptide targeting the mitochondrion; the sequence is MAFRLKSDVRLAGSWLCLRGARAL. Heme is bound at residue C447.

Belongs to the cytochrome P450 family. Requires heme as cofactor.

It is found in the mitochondrion inner membrane. The catalysed reaction is a steroid + 2 reduced [adrenodoxin] + O2 + 2 H(+) = an 11beta-hydroxysteroid + 2 oxidized [adrenodoxin] + H2O. It carries out the reaction 11-deoxycortisol + 2 reduced [adrenodoxin] + O2 + 2 H(+) = cortisol + 2 oxidized [adrenodoxin] + H2O. The enzyme catalyses 21-hydroxyprogesterone + 2 reduced [adrenodoxin] + O2 + 2 H(+) = corticosterone + 2 oxidized [adrenodoxin] + H2O. It catalyses the reaction 21-hydroxyprogesterone + 2 reduced [adrenodoxin] + O2 + 2 H(+) = 18-hydroxy-11-deoxycorticosterone + 2 oxidized [adrenodoxin] + H2O. The catalysed reaction is 21-hydroxyprogesterone + 2 reduced [adrenodoxin] + O2 + 2 H(+) = 19-hydroxy-11-deoxycorticosterone + 2 oxidized [adrenodoxin] + H2O. It carries out the reaction cortisol + 2 reduced [adrenodoxin] + O2 + 2 H(+) = 18-hydroxycortisol + 2 oxidized [adrenodoxin] + H2O. The enzyme catalyses 11-deoxycortisol + 2 reduced [adrenodoxin] + O2 + 2 H(+) = 18-hydroxy-11-deoxycortisol + 2 oxidized [adrenodoxin] + H2O. Its pathway is steroid biosynthesis; glucocorticoid biosynthesis. It functions in the pathway steroid hormone biosynthesis. Functionally, a cytochrome P450 monooxygenase involved in the biosynthesis of adrenal corticoids. Catalyzes a variety of reactions that are essential for many species, including detoxification, defense, and the formation of endogenous chemicals like steroid hormones. Steroid 11beta, 18- and 19-hydroxylase with preferred regioselectivity at 11beta, then 18, and lastly 19. Catalyzes the hydroxylation of 11-deoxycortisol and 11-deoxycorticosterone (21-hydroxyprogesterone) at 11beta position, yielding cortisol or corticosterone, respectively, but cannot produce aldosterone. Mechanistically, uses molecular oxygen inserting one oxygen atom into a substrate for hydroxylation and reducing the second into a water molecule. Two electrons are provided by NADPH via a two-protein mitochondrial transfer system comprising flavoprotein FDXR (adrenodoxin/ferredoxin reductase) and nonheme iron-sulfur protein FDX1 or FDX2 (adrenodoxin/ferredoxin). Due to its lack of 18-oxidation activity, it is incapable of generating aldosterone. Could also be involved in the androgen metabolic pathway. In Cavia porcellus (Guinea pig), this protein is Cytochrome P450 11B1, mitochondrial (CYP11B1).